Consider the following 159-residue polypeptide: Phosphopantetheine adenylyltransferase (159 aa).

Thr-9 provides a ligand contact to substrate. ATP is bound by residues 9-10 (TF) and His-17. Substrate contacts are provided by Lys-41, Leu-73, and Arg-87. Residues 88-90 (GLR), Glu-98, and 123-129 (YSFISST) contribute to the ATP site.

This sequence belongs to the bacterial CoaD family. As to quaternary structure, homohexamer. The cofactor is Mg(2+).

It localises to the cytoplasm. It carries out the reaction (R)-4'-phosphopantetheine + ATP + H(+) = 3'-dephospho-CoA + diphosphate. The protein operates within cofactor biosynthesis; coenzyme A biosynthesis; CoA from (R)-pantothenate: step 4/5. Functionally, reversibly transfers an adenylyl group from ATP to 4'-phosphopantetheine, yielding dephospho-CoA (dPCoA) and pyrophosphate. The polypeptide is Phosphopantetheine adenylyltransferase (Pseudomonas fluorescens (strain ATCC BAA-477 / NRRL B-23932 / Pf-5)).